Consider the following 326-residue polypeptide: Protein-arginine N-acetylglucosaminyltransferase NleB2 (326 aa).

UDP-N-acetyl-alpha-D-glucosamine is bound by residues 45 to 47 (QWF), Y69, and 216 to 219 (YLDM). The DXD motif motif lies at 218 to 220 (DMD). D220 lines the Mn(2+) pocket. The active-site Proton acceptor is the E250. Residues N317 and S319 each coordinate Mn(2+). Residues S319 and 324–326 (SSW) contribute to the UDP-N-acetyl-alpha-D-glucosamine site.

The protein belongs to the glycosyltransferase NleB family. Mn(2+) is required as a cofactor.

The protein localises to the secreted. It is found in the host cell. The enzyme catalyses L-arginyl-[protein] + UDP-N-acetyl-alpha-D-glucosamine = N(omega)-(N-acetyl-beta-D-glucosaminyl)-L-arginyl-[protein] + UDP + H(+). In terms of biological role, protein-arginine N-acetylglucosaminyltransferase effector that catalyzes the transfer of a single N-acetylglucosamine (GlcNAc) to a conserved arginine residue of host target proteins. In contrast to NleB1, not able to disrupt TNF signaling in infected cells. Shows a lower enzymatic activity than NleB1. In Escherichia coli O127:H6 (strain E2348/69 / EPEC), this protein is Protein-arginine N-acetylglucosaminyltransferase NleB2.